The primary structure comprises 216 residues: Peptide methionine sulfoxide reductase MsrA (216 aa).

The active site involves Cys-54.

The protein belongs to the MsrA Met sulfoxide reductase family.

It catalyses the reaction L-methionyl-[protein] + [thioredoxin]-disulfide + H2O = L-methionyl-(S)-S-oxide-[protein] + [thioredoxin]-dithiol. The enzyme catalyses [thioredoxin]-disulfide + L-methionine + H2O = L-methionine (S)-S-oxide + [thioredoxin]-dithiol. In terms of biological role, has an important function as a repair enzyme for proteins that have been inactivated by oxidation. Catalyzes the reversible oxidation-reduction of methionine sulfoxide in proteins to methionine. The chain is Peptide methionine sulfoxide reductase MsrA from Xylella fastidiosa (strain M12).